The chain runs to 179 residues: Arginine repressor (179 aa).

It belongs to the ArgR family.

It is found in the cytoplasm. Its pathway is amino-acid biosynthesis; L-arginine biosynthesis [regulation]. Functionally, regulates arginine biosynthesis genes. The protein is Arginine repressor of Renibacterium salmoninarum (strain ATCC 33209 / DSM 20767 / JCM 11484 / NBRC 15589 / NCIMB 2235).